We begin with the raw amino-acid sequence, 140 residues long: Large ribosomal subunit protein uL3 (140 aa).

Belongs to the universal ribosomal protein uL3 family. Part of the 50S ribosomal subunit. Forms a cluster with proteins L14 and L19.

One of the primary rRNA binding proteins, it binds directly near the 3'-end of the 23S rRNA, where it nucleates assembly of the 50S subunit. This chain is Large ribosomal subunit protein uL3 (rplC), found in Planobispora rosea.